The sequence spans 353 residues: Chorismate synthase (353 aa).

The NADP(+) site is built by Arg-48 and Arg-54. Residues 125–127 (RSS), 238–239 (NA), Gly-278, 293–297 (KPTSS), and Arg-319 each bind FMN.

It belongs to the chorismate synthase family. As to quaternary structure, homotetramer. Requires FMNH2 as cofactor.

The catalysed reaction is 5-O-(1-carboxyvinyl)-3-phosphoshikimate = chorismate + phosphate. It functions in the pathway metabolic intermediate biosynthesis; chorismate biosynthesis; chorismate from D-erythrose 4-phosphate and phosphoenolpyruvate: step 7/7. Its function is as follows. Catalyzes the anti-1,4-elimination of the C-3 phosphate and the C-6 proR hydrogen from 5-enolpyruvylshikimate-3-phosphate (EPSP) to yield chorismate, which is the branch point compound that serves as the starting substrate for the three terminal pathways of aromatic amino acid biosynthesis. This reaction introduces a second double bond into the aromatic ring system. The protein is Chorismate synthase of Bordetella parapertussis (strain 12822 / ATCC BAA-587 / NCTC 13253).